The chain runs to 124 residues: Large ribosomal subunit protein bL12 (124 aa).

It belongs to the bacterial ribosomal protein bL12 family. Homodimer. Part of the ribosomal stalk of the 50S ribosomal subunit. Forms a multimeric L10(L12)X complex, where L10 forms an elongated spine to which 2 to 4 L12 dimers bind in a sequential fashion. Binds GTP-bound translation factors.

In terms of biological role, forms part of the ribosomal stalk which helps the ribosome interact with GTP-bound translation factors. Is thus essential for accurate translation. This Hamiltonella defensa subsp. Acyrthosiphon pisum (strain 5AT) protein is Large ribosomal subunit protein bL12.